A 156-amino-acid chain; its full sequence is Ribosomal RNA large subunit methyltransferase H (156 aa).

Residues L73, G104, and 123-128 (LSSLTL) contribute to the S-adenosyl-L-methionine site.

This sequence belongs to the RNA methyltransferase RlmH family. Homodimer.

It localises to the cytoplasm. It carries out the reaction pseudouridine(1915) in 23S rRNA + S-adenosyl-L-methionine = N(3)-methylpseudouridine(1915) in 23S rRNA + S-adenosyl-L-homocysteine + H(+). Its function is as follows. Specifically methylates the pseudouridine at position 1915 (m3Psi1915) in 23S rRNA. This Bordetella bronchiseptica (strain ATCC BAA-588 / NCTC 13252 / RB50) (Alcaligenes bronchisepticus) protein is Ribosomal RNA large subunit methyltransferase H.